Reading from the N-terminus, the 512-residue chain is Maturase K (512 aa).

This sequence belongs to the intron maturase 2 family. MatK subfamily.

The protein resides in the plastid. It is found in the chloroplast. In terms of biological role, usually encoded in the trnK tRNA gene intron. Probably assists in splicing its own and other chloroplast group II introns. In Platanus occidentalis (Sycamore), this protein is Maturase K.